Reading from the N-terminus, the 402-residue chain is MSLEGIGFGYRERAPYASNPAFSRGRLVPEAESPTRTPFQRDRDRIIHSTAFRRLKHKTQVFIAHEGDHYRTRLTHTIEVAQIARALARALRLDEDLAEAVALVHDFGHTPFGHTGEDALNERMKNFGGFDHNAQSLRIVTKLEHRYADFDGLNLSWETLEGLVKHNGPLLGPYAAHPDIPVPQPILDFNARYDLELSRFASLEAQCAAIADDIAYNAHDIDDGLRAGLLTLESLDEVPLAKRLLDIVRTRYPNLDPVRTGHELVRRQITIMVEDLIEEAQRRLASARPGTMEDVHNQPRALVGFSDAMRAEEKVLKRFLFKNLYFHESVVVRRHAADRIVQDLFDACFTDPSLMPDEWRLGCEALDKAALARRVADYLAGMTDNYAVREHRRLFDRTPDLA.

Residues 73–217 form the HD domain; it reads RLTHTIEVAQ…AAIADDIAYN (145 aa).

The protein belongs to the dGTPase family. Type 2 subfamily.

The chain is Deoxyguanosinetriphosphate triphosphohydrolase-like protein from Brucella suis (strain ATCC 23445 / NCTC 10510).